A 188-amino-acid polypeptide reads, in one-letter code: Cell division protein SepF (188 aa).

The interval 29-53 (EQQDQDQRATQADGGALATLGDSNP) is disordered.

The protein belongs to the SepF family. In terms of assembly, homodimer. Interacts with FtsZ.

The protein resides in the cytoplasm. Its function is as follows. Cell division protein that is part of the divisome complex and is recruited early to the Z-ring. Probably stimulates Z-ring formation, perhaps through the cross-linking of FtsZ protofilaments. Its function overlaps with FtsA. The chain is Cell division protein SepF from Synechococcus sp. (strain CC9902).